The following is a 672-amino-acid chain: Acetoacetyl-CoA synthetase (672 aa).

It belongs to the ATP-dependent AMP-binding enzyme family.

It localises to the cytoplasm. The protein localises to the cytosol. The enzyme catalyses acetoacetate + ATP + CoA = acetoacetyl-CoA + AMP + diphosphate. In terms of biological role, converts acetoacetate to acetoacetyl-CoA in the cytosol. Ketone body-utilizing enzyme, responsible for the synthesis of cholesterol and fatty acids. This chain is Acetoacetyl-CoA synthetase (AACS), found in Macaca fascicularis (Crab-eating macaque).